The chain runs to 429 residues: Patatin-like phospholipase domain-containing protein 5 (429 aa).

The 170-residue stretch at 12–181 (LSFSGAGYLG…SNNLPFADCP (170 aa)) folds into the PNPLA domain. Residues 16–21 (GAGYLG) carry the GXGXXG motif. Positions 47 to 51 (GSSSG) match the GXSXG motif. Ser-49 acts as the Nucleophile in catalysis. Asp-168 serves as the catalytic Proton acceptor. The short motif at 168–170 (DGA) is the DGA/G element.

Expressed in brain and pituitary gland.

It catalyses the reaction a triacylglycerol + H2O = a diacylglycerol + a fatty acid + H(+). Has abundant triacylglycerol lipase activity. The chain is Patatin-like phospholipase domain-containing protein 5 from Homo sapiens (Human).